A 2128-amino-acid chain; its full sequence is Spectrin beta chain, erythrocytic (2128 aa).

Over residues 1 to 15 the composition is skewed to polar residues; sequence MTSATEFENVGNQPP. Residues 1 to 30 form a disordered region; the sequence is MTSATEFENVGNQPPFSRINARWDAPDDEL. Residues 2–275 form an actin-binding region; that stretch reads TSATEFENVG…IITYVVAFYH (274 aa). At S36 the chain carries Phosphoserine. 2 consecutive Calponin-homology (CH) domains span residues 54 to 158 and 173 to 278; these read VVQK…LRFQ and RSAK…HYFS. T104 is subject to Phosphothreonine. Spectrin repeat units lie at residues 303-411, 416-517, 521-627, 630-733, 736-838, 845-942, 950-1050, 1054-1157, 1162-1250, 1267-1368, 1381-1455, 1473-1574, 1576-1680, 1682-1784, 1789-1890, 1897-1997, and 2004-2064; these read MIEK…LALR, RQEF…QRLE, ALQK…QLEQ, RLWK…DLQD, NFFQ…KLQE, VFGE…REAV, NYCV…LSLG, KLQA…NTLT, FQEF…RHKK, ELQN…EQLS, ADLN…FLDL, LQIS…RLRD, HEAQ…RLEN, YHLF…MQLL, DLHR…RAQL, FRFF…DRLH, and QFSR…KPTT. S1289 is subject to Phosphoserine. S2034 is subject to Phosphoserine. Residues 2062-2108 form a disordered region; that stretch reads PTTLELKERQTPERPTEEPGPQEEEGETAGEAPQVHHAATERTSPVS. Residues T2064, T2072, and T2101 each carry the phosphothreonine modification. Basic and acidic residues predominate over residues 2066–2078; sequence ELKERQTPERPTE. S2105, S2108, S2114, S2116, and S2119 each carry phosphoserine.

This sequence belongs to the spectrin family. As to quaternary structure, composed of nonhomologous chains, alpha and beta, which aggregate to form dimers, tetramers, and higher polymers. Interacts with BCAM.

Its subcellular location is the cytoplasm. The protein resides in the cytoskeleton. It is found in the cell cortex. In terms of biological role, spectrin is the major constituent of the cytoskeletal network underlying the erythrocyte plasma membrane. It associates with band 4.1 and actin to form the cytoskeletal superstructure of the erythrocyte plasma membrane. The polypeptide is Spectrin beta chain, erythrocytic (Sptb) (Mus musculus (Mouse)).